We begin with the raw amino-acid sequence, 162 residues long: Transcriptional repressor NrdR (162 aa).

A zinc finger lies at 3-34 (CPFCQFEGLKVTDSRDAMEMNAIRRRRECLNC). The ATP-cone domain maps to 48–138 (VQVQKRDGTY…VYKRFKDLGE (91 aa)).

The protein belongs to the NrdR family. Zn(2+) serves as cofactor.

In terms of biological role, negatively regulates transcription of bacterial ribonucleotide reductase nrd genes and operons by binding to NrdR-boxes. In Protochlamydia amoebophila (strain UWE25), this protein is Transcriptional repressor NrdR.